The following is a 305-amino-acid chain: MENKYTHGVLFYHEHSGLKNINQGIGEVTTALSSICKHLSIQLSENEGDIIKYCQEIKAKDYAKDVDILFILGGDGTVNELINGVMTHDLQLPIGILPGGTFNDFTKTLNIAPNHKQASEQMISAQVGTYDVIKINNQYALNFVGLGLIVQNAENVQDGSKDIFGKLSYIGSTVKTLLNPTQFNYQLSIDDKTYSGETTMILSANGPFIGGSRIPLTDLSPQDGELNTFIFNEQSFSILNDIFKKRDSMNWNEITQGIEHIPGKKISLTTDPTMKVDIDGEISLETPIDIEVIPNAIQLLTVNDL.

The region spanning 3 to 139 is the DAGKc domain; the sequence is NKYTHGVLFY…YDVIKINNQY (137 aa). ATP contacts are provided by residues Ser-44, 74–80, and Thr-101; that span reads GDGTVNE. Residues Ser-220, Asp-223, and Glu-225 each coordinate Mg(2+). Glu-281 (proton acceptor) is an active-site residue.

This sequence belongs to the diacylglycerol/lipid kinase family. It depends on Mg(2+) as a cofactor.

May catalyze the ATP-dependent phosphorylation of lipids other than diacylglycerol (DAG). In fact, is not able to exhibit diacylglycerol kinase activity in vitro. The polypeptide is Putative lipid kinase SAR0780 (Staphylococcus aureus (strain MRSA252)).